Here is a 153-residue protein sequence, read N- to C-terminus: Arginine repressor (153 aa).

It belongs to the ArgR family.

It is found in the cytoplasm. It functions in the pathway amino-acid biosynthesis; L-arginine biosynthesis [regulation]. Its function is as follows. Regulates arginine biosynthesis genes. This is Arginine repressor from Acetivibrio thermocellus (strain ATCC 27405 / DSM 1237 / JCM 9322 / NBRC 103400 / NCIMB 10682 / NRRL B-4536 / VPI 7372) (Clostridium thermocellum).